Reading from the N-terminus, the 305-residue chain is tRNA pseudouridine synthase B (305 aa).

Catalysis depends on Asp39, which acts as the Nucleophile.

The protein belongs to the pseudouridine synthase TruB family. Type 1 subfamily.

The catalysed reaction is uridine(55) in tRNA = pseudouridine(55) in tRNA. Functionally, responsible for synthesis of pseudouridine from uracil-55 in the psi GC loop of transfer RNAs. This chain is tRNA pseudouridine synthase B, found in Staphylococcus aureus (strain MRSA252).